The sequence spans 580 residues: uncharacterized protein (580 aa).

5 disordered regions span residues 161–241, 256–281, 325–345, 472–495, and 544–564; these read SFSP…SVND, LGSLSTNTSSTAQKNKSRKPTKSFSD, NVSHEEKSHSVQDDKSKQLLK, PRDTDIKATPNLSQSGNINSDNSD, and SAVLRRQSSQSSGANDDKEVR. Low complexity predominate over residues 192 to 203; the sequence is SNSNSSDTSTDD. 2 stretches are compositionally biased toward polar residues: residues 223–241 and 256–269; these read THSSAPPLNQQKSSTSVND and LGSLSTNTSSTAQK. A compositionally biased stretch (basic and acidic residues) spans 326-341; the sequence is VSHEEKSHSVQDDKSK. Positions 481–495 are enriched in polar residues; sequence PNLSQSGNINSDNSD.

This is an uncharacterized protein from Schizosaccharomyces pombe (strain 972 / ATCC 24843) (Fission yeast).